The following is a 272-amino-acid chain: Shikimate dehydrogenase (NADP(+)) (272 aa).

Residues 14–16 and Thr-61 contribute to the shikimate site; that span reads SKS. Lys-65 serves as the catalytic Proton acceptor. Shikimate contacts are provided by Asn-86 and Asp-102. Residues 126-130, 150-155, and Met-214 contribute to the NADP(+) site; these read GAGGA and NRTASK. Tyr-216 contacts shikimate. Gly-239 contacts NADP(+).

Belongs to the shikimate dehydrogenase family. As to quaternary structure, homodimer.

It catalyses the reaction shikimate + NADP(+) = 3-dehydroshikimate + NADPH + H(+). The protein operates within metabolic intermediate biosynthesis; chorismate biosynthesis; chorismate from D-erythrose 4-phosphate and phosphoenolpyruvate: step 4/7. Its function is as follows. Involved in the biosynthesis of the chorismate, which leads to the biosynthesis of aromatic amino acids. Catalyzes the reversible NADPH linked reduction of 3-dehydroshikimate (DHSA) to yield shikimate (SA). The polypeptide is Shikimate dehydrogenase (NADP(+)) (Pseudoalteromonas atlantica (strain T6c / ATCC BAA-1087)).